A 501-amino-acid polypeptide reads, in one-letter code: Aldehyde dehydrogenase 1A1 (501 aa).

S2 is modified (N-acetylserine). An N6-acetyllysine mark is found at K91 and K128. NAD(+)-binding positions include 167–170 (IPWN), 193–196 (KPAE), 226–227 (GP), and 246–247 (GS). K252 bears the N6-acetyllysine mark. E269 (proton acceptor) is an active-site residue. Position 269–271 (269–271 (ELG)) interacts with NAD(+). The active-site Nucleophile is the C303. Positions 336 to 501 (LTPGVTQGPQ…VTVKISQKNS (166 aa)) are mediates interaction with PRMT3. Position 337 is a phosphothreonine (T337). NAD(+) is bound at residue 349–353 (EQYDK). 2 positions are modified to N6-acetyllysine: K353 and K367. An NAD(+)-binding site is contributed by 400-402 (EIF). An N6-acetyllysine modification is found at K410. The residue at position 413 (S413) is a Phosphoserine. An N6-acetyllysine mark is found at K419, K435, and K495.

The protein belongs to the aldehyde dehydrogenase family. In terms of assembly, homotetramer. Interacts with PRMT3; the interaction is direct, inhibits ALDH1A1 aldehyde dehydrogenase activity and is independent of the methyltransferase activity of PRMT3. The N-terminus is blocked most probably by acetylation. As to expression, expressed by erythrocytes (at protein level).

The protein localises to the cytoplasm. It is found in the cytosol. Its subcellular location is the cell projection. It localises to the axon. The enzyme catalyses an aldehyde + NAD(+) + H2O = a carboxylate + NADH + 2 H(+). It catalyses the reaction all-trans-retinal + NAD(+) + H2O = all-trans-retinoate + NADH + 2 H(+). It carries out the reaction 9-cis-retinal + NAD(+) + H2O = 9-cis-retinoate + NADH + 2 H(+). The catalysed reaction is 11-cis-retinal + NAD(+) + H2O = 11-cis-retinoate + NADH + 2 H(+). The enzyme catalyses 13-cis-retinal + NAD(+) + H2O = 13-cis-retinoate + NADH + 2 H(+). It catalyses the reaction 3-deoxyglucosone + NAD(+) + H2O = 2-dehydro-3-deoxy-D-gluconate + NADH + 2 H(+). It carries out the reaction (E)-4-hydroxynon-2-enal + NAD(+) + H2O = (E)-4-hydroxynon-2-enoate + NADH + 2 H(+). The catalysed reaction is malonaldehyde + NAD(+) + H2O = 3-oxopropanoate + NADH + 2 H(+). The enzyme catalyses hexanal + NAD(+) + H2O = hexanoate + NADH + 2 H(+). It catalyses the reaction propanal + NAD(+) + H2O = propanoate + NADH + 2 H(+). It carries out the reaction acetaldehyde + NAD(+) + H2O = acetate + NADH + 2 H(+). The catalysed reaction is benzaldehyde + NAD(+) + H2O = benzoate + NADH + 2 H(+). The enzyme catalyses 4-aminobutanal + NAD(+) + H2O = 4-aminobutanoate + NADH + 2 H(+). It participates in cofactor metabolism; retinol metabolism. Its activity is regulated as follows. Inhibited by citral, disulfiram, and cyanamide. Activated by diethylstilbestrol. Inhibited by duocarmycin analogs. In terms of biological role, cytosolic dehydrogenase that catalyzes the irreversible oxidation of a wide range of aldehydes to their corresponding carboxylic acid. Functions downstream of retinol dehydrogenases and catalyzes the oxidation of retinaldehyde into retinoic acid, the second step in the oxidation of retinol/vitamin A into retinoic acid. This pathway is crucial to control the levels of retinol and retinoic acid, two important molecules which excess can be teratogenic and cytotoxic. Also oxidizes aldehydes resulting from lipid peroxidation like (E)-4-hydroxynon-2-enal/HNE, malonaldehyde and hexanal that form protein adducts and are highly cytotoxic. By participating for instance to the clearance of (E)-4-hydroxynon-2-enal/HNE in the lens epithelium prevents the formation of HNE-protein adducts and lens opacification. Also functions downstream of fructosamine-3-kinase in the fructosamine degradation pathway by catalyzing the oxidation of 3-deoxyglucosone, the carbohydrate product of fructosamine 3-phosphate decomposition, which is itself a potent glycating agent that may react with lysine and arginine side-chains of proteins. Also has an aminobutyraldehyde dehydrogenase activity and is probably part of an alternative pathway for the biosynthesis of GABA/4-aminobutanoate in midbrain, thereby playing a role in GABAergic synaptic transmission. This is Aldehyde dehydrogenase 1A1 from Homo sapiens (Human).